Consider the following 229-residue polypeptide: Cytochrome c oxidase subunit 2 (229 aa).

At 1–26 the chain is on the mitochondrial intermembrane side; that stretch reads MATWAQFGLQDASSPLMEELTYFHDY. A helical membrane pass occupies residues 27-48; the sequence is ALIVLTLITILVFYGLVSLLLS. Over 49–62 the chain is Mitochondrial matrix; sequence SSTNRFFLEGQELE. A helical membrane pass occupies residues 63-82; it reads TIWTVVPAFILIFIALPSLQ. The Mitochondrial intermembrane segment spans residues 83–229; it reads LLYLMDEVNN…ENWVAQYIEE (147 aa). Positions 161, 196, 198, 200, 204, and 207 each coordinate Cu cation. Glu-198 provides a ligand contact to Mg(2+).

This sequence belongs to the cytochrome c oxidase subunit 2 family. Component of the cytochrome c oxidase (complex IV, CIV), a multisubunit enzyme composed of a catalytic core of 3 subunits and several supernumerary subunits. The complex exists as a monomer or a dimer and forms supercomplexes (SCs) in the inner mitochondrial membrane with ubiquinol-cytochrome c oxidoreductase (cytochrome b-c1 complex, complex III, CIII). The cofactor is Cu cation.

The protein resides in the mitochondrion inner membrane. It catalyses the reaction 4 Fe(II)-[cytochrome c] + O2 + 8 H(+)(in) = 4 Fe(III)-[cytochrome c] + 2 H2O + 4 H(+)(out). Component of the cytochrome c oxidase, the last enzyme in the mitochondrial electron transport chain which drives oxidative phosphorylation. The respiratory chain contains 3 multisubunit complexes succinate dehydrogenase (complex II, CII), ubiquinol-cytochrome c oxidoreductase (cytochrome b-c1 complex, complex III, CIII) and cytochrome c oxidase (complex IV, CIV), that cooperate to transfer electrons derived from NADH and succinate to molecular oxygen, creating an electrochemical gradient over the inner membrane that drives transmembrane transport and the ATP synthase. Cytochrome c oxidase is the component of the respiratory chain that catalyzes the reduction of oxygen to water. Electrons originating from reduced cytochrome c in the intermembrane space (IMS) are transferred via the dinuclear copper A center (CU(A)) of subunit 2 and heme A of subunit 1 to the active site in subunit 1, a binuclear center (BNC) formed by heme A3 and copper B (CU(B)). The BNC reduces molecular oxygen to 2 water molecules using 4 electrons from cytochrome c in the IMS and 4 protons from the mitochondrial matrix. The chain is Cytochrome c oxidase subunit 2 (COII) from Paracentrotus lividus (Common sea urchin).